Consider the following 497-residue polypeptide: Cobyric acid synthase (497 aa).

In terms of domain architecture, GATase cobBQ-type spans aspartate 251–phenylalanine 443. Cysteine 333 (nucleophile) is an active-site residue. Histidine 435 is a catalytic residue.

The protein belongs to the CobB/CobQ family. CobQ subfamily.

Its pathway is cofactor biosynthesis; adenosylcobalamin biosynthesis. In terms of biological role, catalyzes amidations at positions B, D, E, and G on adenosylcobyrinic A,C-diamide. NH(2) groups are provided by glutamine, and one molecule of ATP is hydrogenolyzed for each amidation. The sequence is that of Cobyric acid synthase from Carboxydothermus hydrogenoformans (strain ATCC BAA-161 / DSM 6008 / Z-2901).